A 614-amino-acid polypeptide reads, in one-letter code: Leucine-rich repeat and immunoglobulin-like domain-containing nogo receptor-interacting protein 1 (614 aa).

An N-terminal signal peptide occupies residues 1–35 (MLAGGVRSMPSPLLACWQPILLLVLGSVLSGSATG). Intrachain disulfides connect Cys-36–Cys-42 and Cys-40–Cys-51. One can recognise an LRRNT domain in the interval 36–65 (CPPRCECSAQDRAVLCHRKRFVAVPEGIPT). Over 36–555 (CPPRCECSAQ…FDIKTLIIAT (520 aa)) the chain is Extracellular. LRR repeat units follow at residues 66–87 (ETRL…EFAS), 90–111 (HLEE…AFNN), 114–135 (NLRT…VFTG), 138–159 (NLTK…MFQD), 162–183 (NLKS…AFSG), 186–207 (SLEQ…ALSH), 210–231 (GLIV…SFKR), 258–279 (NLTS…AVRH), 282–303 (YLRF…MLHE), 306–327 (RLQE…AFRG), and 330–351 (YLRV…VFHS). An N-linked (GlcNAc...) asparagine glycan is attached at Asn-138. A glycan (N-linked (GlcNAc...) asparagine) is linked at Asn-196. Asn-258, Asn-268, and Asn-287 each carry an N-linked (GlcNAc...) asparagine glycan. Asn-335 carries N-linked (GlcNAc...) asparagine glycosylation. One can recognise an LRRCT domain in the interval 363-417 (NPLACDCRLLWVFRRRWRLNFNRQQPTCATPEFVQGKEFKDFPDVLLPNYFTCRR). 3 cysteine pairs are disulfide-bonded: Cys-367/Cys-390, Cys-369/Cys-415, and Cys-440/Cys-491. Positions 405 to 507 (PDVLLPNYFT…GNDSMPAHLH (103 aa)) constitute an Ig-like C2-type domain. Asn-486 and Asn-536 each carry an N-linked (GlcNAc...) asparagine glycan. A helical transmembrane segment spans residues 556–576 (TMGFISFLGVVLFCLVLLFLW). Residues 577 to 614 (SRGKGNTKHNIEIEYVPRKSDAGISSADAPRKFNMKMI) lie on the Cytoplasmic side of the membrane. Phosphoserine is present on Ser-596.

Homotetramer. Forms a ternary complex with RTN4R/NGFR and RTN4R/TNFRSF19. Interacts with NGRF, RTN4R and MYT1L. N-glycosylated. Contains predominantly high-mannose glycans.

The protein localises to the cell membrane. Functionally, functional component of the Nogo receptor signaling complex (RTN4R/NGFR) in RhoA activation responsible for some inhibition of axonal regeneration by myelin-associated factors. Is also an important negative regulator of oligodentrocyte differentiation and axonal myelination. Acts in conjunction with RTN4 and RTN4R in regulating neuronal precursor cell motility during cortical development. The polypeptide is Leucine-rich repeat and immunoglobulin-like domain-containing nogo receptor-interacting protein 1 (LINGO1) (Macaca fascicularis (Crab-eating macaque)).